The primary structure comprises 101 residues: Carboxysome shell vertex protein CcmL (101 aa).

The region spanning 1 to 84 (MQIAKVRGTV…VDAAVVAIID (84 aa)) is the BMV domain.

Belongs to the CcmL/EutN family. CcmL subfamily. Homopentamer. Interacts with full-length CcmM.

The protein resides in the carboxysome. Functionally, probably forms vertices in the carboxysome, a polyhedral inclusion where RuBisCO (ribulose bisphosphate carboxylase, rbcL-rbcS) is sequestered. Has been modeled to induce curvature upon insertion into an otherwise flat hexagonal molecular layer of CcmK subunits. The sequence is that of Carboxysome shell vertex protein CcmL from Nostoc sp. (strain PCC 7120 / SAG 25.82 / UTEX 2576).